Consider the following 1003-residue polypeptide: Helicase-like transcription factor (1003 aa).

An Omega-N-methylarginine modification is found at Arg27. The DNA-binding stretch occupies residues Glu38 to Val287. A Glycyl lysine isopeptide (Lys-Gly) (interchain with G-Cter in SUMO2) cross-link involves residue Lys112. Tyr195 bears the Phosphotyrosine; by JAK2 mark. Lys211 is covalently cross-linked (Glycyl lysine isopeptide (Lys-Gly) (interchain with G-Cter in SUMO2)). Residue Asp294–Thr301 coordinates ATP. The disordered stretch occupies residues Pro317–Thr373. The span at Pro328 to Ser352 shows a compositional bias: basic and acidic residues. Residues Glu353 to Thr373 show a composition bias toward polar residues. Phosphoserine is present on residues Ser394, Ser395, and Ser397. Positions Asp433–Lys600 constitute a Helicase ATP-binding domain. The short motif at Asp551–His554 is the DEGH box element. Phosphothreonine is present on Thr730. The segment at Cys754–Arg795 adopts an RING-type zinc-finger fold. The region spanning Ala831–Lys990 is the Helicase C-terminal domain. Residues Ser919–Leu1003 form an interaction with SP1 and SP3 region.

It belongs to the SNF2/RAD54 helicase family. RAD16 subfamily. As to quaternary structure, interacts with SP1 and SP3 independently of DNA; the interaction with these transcriptional factors may be required for basal transcription of target genes. Interacts with EGR1; the interaction requires prior binding to DNA and represses c-Rel via a DNA looping mechanism. Interacts with GATA4. Interacts with PCNA; the interaction promotes polyubiquitination of PCNA through association with the UBE2B-RAD18 and UBE2V2-UBE2N ubiquitin ligase complexes. Interacts with RAD18, SHPRH, UBE2V2 and UBE2N. In terms of tissue distribution, expressed in brain, heart, kidney, liver, lung, pancreas, placenta and skeletal muscle.

The protein localises to the cytoplasm. Its subcellular location is the nucleus. It is found in the nucleolus. The protein resides in the nucleoplasm. It catalyses the reaction S-ubiquitinyl-[E2 ubiquitin-conjugating enzyme]-L-cysteine + [acceptor protein]-L-lysine = [E2 ubiquitin-conjugating enzyme]-L-cysteine + N(6)-ubiquitinyl-[acceptor protein]-L-lysine.. It participates in protein modification; protein ubiquitination. Functionally, has both helicase and E3 ubiquitin ligase activities. Possesses intrinsic ATP-dependent nucleosome-remodeling activity. This activity may be required for transcriptional activation or repression of specific target promoters. These may include the SERPINE1, to which this protein can bind directly. Plays a role in error-free postreplication repair (PRR) of damaged DNA and maintains genomic stability through acting as a ubiquitin ligase for 'Lys-63'-linked polyubiquitination of chromatin-bound PCNA. This Mus musculus (Mouse) protein is Helicase-like transcription factor (Hltf).